Consider the following 203-residue polypeptide: Small ribosomal subunit protein uS4 (203 aa).

The S4 RNA-binding domain occupies 93 to 153; the sequence is QRLDSLVYRL…DKSKNIVPIQ (61 aa).

This sequence belongs to the universal ribosomal protein uS4 family. As to quaternary structure, part of the 30S ribosomal subunit. Contacts protein S5. The interaction surface between S4 and S5 is involved in control of translational fidelity.

One of the primary rRNA binding proteins, it binds directly to 16S rRNA where it nucleates assembly of the body of the 30S subunit. Its function is as follows. With S5 and S12 plays an important role in translational accuracy. The protein is Small ribosomal subunit protein uS4 of Leuconostoc citreum (strain KM20).